Reading from the N-terminus, the 142-residue chain is Large ribosomal subunit protein uL13 (142 aa).

The protein belongs to the universal ribosomal protein uL13 family. In terms of assembly, part of the 50S ribosomal subunit.

Functionally, this protein is one of the early assembly proteins of the 50S ribosomal subunit, although it is not seen to bind rRNA by itself. It is important during the early stages of 50S assembly. This chain is Large ribosomal subunit protein uL13, found in Pseudomonas putida (strain ATCC 700007 / DSM 6899 / JCM 31910 / BCRC 17059 / LMG 24140 / F1).